The sequence spans 143 residues: uncharacterized protein (143 aa).

Transmembrane regions (helical) follow at residues 20 to 39 (FKYC…WITV) and 113 to 135 (YFSL…ITGL).

The protein resides in the membrane. This is an uncharacterized protein from Saccharomyces cerevisiae (strain ATCC 204508 / S288c) (Baker's yeast).